A 321-amino-acid chain; its full sequence is NADPH-dependent codeinone reductase 1-5 (321 aa).

The NADPH site is built by T27 and D51. Active-site proton donor residues include Y56 and H119. H119 is a substrate binding site. Q187, S214, L216, S264, and R269 together coordinate NADPH.

The protein belongs to the aldo/keto reductase family. As to expression, latex secreting cells (laticifer cells). Expressed constitutively and ubiquitously with highest levels in capsules.

Its subcellular location is the cytoplasm. The protein localises to the cytosol. It catalyses the reaction codeine + NADP(+) = codeinone + NADPH + H(+). It carries out the reaction neopine + NADP(+) = neopinone + NADPH + H(+). The enzyme catalyses morphine + NADP(+) = morphinone + NADPH + H(+). The catalysed reaction is neomorphine + NADP(+) = neomorphinone + NADPH + H(+). It functions in the pathway alkaloid biosynthesis; morphine biosynthesis. NADPH-dependent codeinone reductase involved in biosynthesis of morphinan-type benzylisoquinoline and opiate alkaloids natural products. Reduces codeinone to codeine in the penultimate step in morphine biosynthesis. Can use morphinone, hydrocodone and hydromorphone as substrate during reductive reaction with NADPH as cofactor, and morphine and dihydrocodeine as substrate during oxidative reaction with NADP as cofactor. Converts morphinone to morphine, and neomorphinone to neomorphine. Reduces irreversibly neopinone, a spontaneous isomer of codeinone, to neopine; in planta, neopine levels are limited to low levels. In Papaver somniferum (Opium poppy), this protein is NADPH-dependent codeinone reductase 1-5.